The chain runs to 142 residues: Small heat shock protein IbpB (142 aa).

The sHSP domain occupies 26 to 137; the sequence is AGESQSFPPY…AAQRIAISER (112 aa).

It belongs to the small heat shock protein (HSP20) family. Homodimer. Forms homomultimers of about 100-150 subunits at optimal growth temperatures. Conformation changes to oligomers at high temperatures or high ionic concentrations. The decrease in size of the multimers is accompanied by an increase in chaperone activity.

Its subcellular location is the cytoplasm. Functionally, associates with aggregated proteins, together with IbpA, to stabilize and protect them from irreversible denaturation and extensive proteolysis during heat shock and oxidative stress. Aggregated proteins bound to the IbpAB complex are more efficiently refolded and reactivated by the ATP-dependent chaperone systems ClpB and DnaK/DnaJ/GrpE. Its activity is ATP-independent. This chain is Small heat shock protein IbpB, found in Shigella flexneri serotype 5b (strain 8401).